We begin with the raw amino-acid sequence, 375 residues long: N5-carboxyaminoimidazole ribonucleotide synthase (375 aa).

ATP-binding positions include arginine 108, lysine 148, 153-159 (GYDGKGQ), 183-186 (EQYL), glutamate 191, histidine 214, and 266-267 (NE). One can recognise an ATP-grasp domain in the interval 112–296 (KQTLLEANTQ…QFDTHILAIT (185 aa)).

It belongs to the PurK/PurT family. In terms of assembly, homodimer.

It catalyses the reaction 5-amino-1-(5-phospho-beta-D-ribosyl)imidazole + hydrogencarbonate + ATP = 5-carboxyamino-1-(5-phospho-D-ribosyl)imidazole + ADP + phosphate + 2 H(+). Its pathway is purine metabolism; IMP biosynthesis via de novo pathway; 5-amino-1-(5-phospho-D-ribosyl)imidazole-4-carboxylate from 5-amino-1-(5-phospho-D-ribosyl)imidazole (N5-CAIR route): step 1/2. In terms of biological role, catalyzes the ATP-dependent conversion of 5-aminoimidazole ribonucleotide (AIR) and HCO(3)(-) to N5-carboxyaminoimidazole ribonucleotide (N5-CAIR). This Staphylococcus epidermidis (strain ATCC 12228 / FDA PCI 1200) protein is N5-carboxyaminoimidazole ribonucleotide synthase.